Reading from the N-terminus, the 538-residue chain is Phosphoenolpyruvate carboxykinase (ATP) (538 aa).

Substrate is bound by residues arginine 64, tyrosine 205, and lysine 211. ATP is bound by residues lysine 211, histidine 230, and 246–254; that span reads GLSGTGKTT. 2 residues coordinate Mn(2+): lysine 211 and histidine 230. Aspartate 267 is a binding site for Mn(2+). ATP contacts are provided by residues glutamate 295, arginine 331, 447-448, and threonine 453; that span reads RI. Arginine 331 contacts substrate.

It belongs to the phosphoenolpyruvate carboxykinase (ATP) family. In terms of assembly, monomer. Mn(2+) is required as a cofactor.

The protein resides in the cytoplasm. The enzyme catalyses oxaloacetate + ATP = phosphoenolpyruvate + ADP + CO2. Its pathway is carbohydrate biosynthesis; gluconeogenesis. In terms of biological role, involved in the gluconeogenesis. Catalyzes the conversion of oxaloacetate (OAA) to phosphoenolpyruvate (PEP) through direct phosphoryl transfer between the nucleoside triphosphate and OAA. The protein is Phosphoenolpyruvate carboxykinase (ATP) of Haemophilus influenzae (strain ATCC 51907 / DSM 11121 / KW20 / Rd).